The following is a 318-amino-acid chain: NADH-ubiquinone oxidoreductase chain 1 (318 aa).

The next 8 membrane-spanning stretches (helical) occupy residues 2–22 (FMVN…FLTL), 76–96 (TLAL…HPLI), 98–118 (FNLG…SILW), 140–160 (ISYE…SGSF), 171–191 (HSWL…STLA), 217–237 (AGSF…MNAL), 253–273 (ELYT…FLWI), and 294–314 (LPLT…TSGI).

Belongs to the complex I subunit 1 family. Core subunit of respiratory chain NADH dehydrogenase (Complex I) which is composed of 45 different subunits.

It localises to the mitochondrion inner membrane. The enzyme catalyses a ubiquinone + NADH + 5 H(+)(in) = a ubiquinol + NAD(+) + 4 H(+)(out). Its function is as follows. Core subunit of the mitochondrial membrane respiratory chain NADH dehydrogenase (Complex I) which catalyzes electron transfer from NADH through the respiratory chain, using ubiquinone as an electron acceptor. Essential for the catalytic activity and assembly of complex I. The chain is NADH-ubiquinone oxidoreductase chain 1 (MT-ND1) from Ateles paniscus (Black spider monkey).